The chain runs to 377 residues: Chaperone protein DnaJ (377 aa).

In terms of domain architecture, J spans 5 to 70 (DYYEILGVSK…EKRSAYDQYG (66 aa)). The CR-type zinc finger occupies 131–209 (GVVREICVPT…CRGSGRIERT (79 aa)). Cys-144, Cys-147, Cys-161, Cys-164, Cys-183, Cys-186, Cys-197, and Cys-200 together coordinate Zn(2+). CXXCXGXG motif repeat units lie at residues 144–151 (CLQCRGSG), 161–168 (CVTCHGHG), 183–190 (CPSCNGHG), and 197–204 (CNKCRGSG).

Belongs to the DnaJ family. As to quaternary structure, homodimer. Zn(2+) serves as cofactor.

It is found in the cytoplasm. Participates actively in the response to hyperosmotic and heat shock by preventing the aggregation of stress-denatured proteins and by disaggregating proteins, also in an autonomous, DnaK-independent fashion. Unfolded proteins bind initially to DnaJ; upon interaction with the DnaJ-bound protein, DnaK hydrolyzes its bound ATP, resulting in the formation of a stable complex. GrpE releases ADP from DnaK; ATP binding to DnaK triggers the release of the substrate protein, thus completing the reaction cycle. Several rounds of ATP-dependent interactions between DnaJ, DnaK and GrpE are required for fully efficient folding. Also involved, together with DnaK and GrpE, in the DNA replication of plasmids through activation of initiation proteins. This Blochmanniella floridana protein is Chaperone protein DnaJ.